Consider the following 682-residue polypeptide: MDSFNYIHGKYKKNGTGGDRSINPSSHSSSGKNIILCFDGTRENFGPQPFTNILKLYNLLENGDSSEQICYYQPGIGSVGFDAVVDVRRRLTISHLQNLLDSMFAFSLDNHICSAYLFLMKYFEPGDRIYMFGFSRGAFIARVLAGMIERVGLLSKGLEEMVKMAWQIYEKWEYDSQPNELQYTSTLAEEFKKTFSRDYEVKIHFQGLFDSVNSVGILRDRLFPCTQRSNIVEHVRHCVSLDERRGKFKQLCFTPMPYIPKLFSLTYCNHITDQCSPVPTSNALMRDLTPENPLIKYTLKSGAHSISNPSPLIPDNPGRLLSSKSEETTELLLDLNSFLEGNSYARDTECSTRGIEAIFQLQSIQGSGTSSRMTMTPDLIEKWFPGDHSDVGGGWAPDCETEENLSNLTLRWILAEAIKFGVKFKPGAIHDFATKHTSIGSLFADTHDYLSFNSPKKCSLLGVSDNEDGAREDKSGRNERMEDCLKNIKETRLSLKDEKEKVKDAFTLKCGHANKFMRLVWWVLELLPIGIRMENKEGKWQNFHTPNLGRSRYVPEYVSLHWSVYWRIKFDRRYRPDNMPEYVRQLFQDLEGIDLKSNKVSNKYDKQDNSNGSEINGGFFDNEEGQELHMGQKASYFATTYNSRLFDSKYSQLKKKFMDWDSNSWTDIPDDLKIYLQQDESL.

This is an uncharacterized protein from Saccharomyces cerevisiae (strain ATCC 204508 / S288c) (Baker's yeast).